The chain runs to 580 residues: E3 ubiquitin-protein ligase TRIM45 (580 aa).

An RING-type zinc finger spans residues 29-98; the sequence is CPLCMGLFKA…QIGILCPVCD (70 aa). 2 consecutive B box-type zinc fingers follow at residues 130-176 and 186-227; these read GQGL…MVDL and GKPI…CDFT. Zn(2+) contacts are provided by Cys135, Cys138, Cys158, His162, Cys191, His194, Cys214, and His219. Positions 281–335 form a coiled coil; the sequence is SEGYIKAIEEHRDKLLKQLEDIRVQKENSLQLQKAQLEQLLADMRTGVEFTEHLL. A Filamin repeat occupies 394 to 497; it reads TKEVDPAKCV…VQGSPFTVTV (104 aa).

It belongs to the TRIM/RBCC family.

It localises to the cytoplasm. The protein resides in the nucleus. It carries out the reaction S-ubiquitinyl-[E2 ubiquitin-conjugating enzyme]-L-cysteine + [acceptor protein]-L-lysine = [E2 ubiquitin-conjugating enzyme]-L-cysteine + N(6)-ubiquitinyl-[acceptor protein]-L-lysine.. Its function is as follows. E3 ubiquitin-protein ligase that plays a role in the regulation of inflammatory response. Mechanistically, mediates the 'Lys-48'-linked polyubiquitination of TAB2, a regulatory protein of the kinase TAK1, leading to its degradation via the proteasomal pathway and inhibition of the TLR-mediated inflammatory immune response. May act as a transcriptional repressor in mitogen-activated protein kinase signaling pathway. The chain is E3 ubiquitin-protein ligase TRIM45 (TRIM45) from Bos taurus (Bovine).